Here is a 227-residue protein sequence, read N- to C-terminus: MACPVQLGFQDAASPIMEELTYFHDHTLMIVFLISSLVLYIISLMLTTELTHTSTMDAQEVETVWTILPAVILILIALPSLRILYMMDEITTPSLTLKTMGHQWYWSYEYTDYENLCFDSYMTPSSDLKPGELRLLEVDNRVVLPTEMSIRMLISSEDVLHSWTVPSLGVKTDAIPGRLNQATLMTSRPGIYYGQCSEICGANHSFMPIVLELVPLKHFEEWLLAML.

Residues Met-1–Ser-14 are Mitochondrial intermembrane-facing. The chain crosses the membrane as a helical span at residues Pro-15–Met-45. At Leu-46–Gln-59 the chain is on the mitochondrial matrix side. Residues Glu-60–Met-87 form a helical membrane-spanning segment. Topologically, residues Asp-88–Leu-227 are mitochondrial intermembrane. His-161, Cys-196, Glu-198, Cys-200, His-204, and Met-207 together coordinate Cu cation. Residue Glu-198 participates in Mg(2+) binding.

The protein belongs to the cytochrome c oxidase subunit 2 family. In terms of assembly, component of the cytochrome c oxidase (complex IV, CIV), a multisubunit enzyme composed of 14 subunits. The complex is composed of a catalytic core of 3 subunits MT-CO1, MT-CO2 and MT-CO3, encoded in the mitochondrial DNA, and 11 supernumerary subunits COX4I, COX5A, COX5B, COX6A, COX6B, COX6C, COX7A, COX7B, COX7C, COX8 and NDUFA4, which are encoded in the nuclear genome. The complex exists as a monomer or a dimer and forms supercomplexes (SCs) in the inner mitochondrial membrane with NADH-ubiquinone oxidoreductase (complex I, CI) and ubiquinol-cytochrome c oxidoreductase (cytochrome b-c1 complex, complex III, CIII), resulting in different assemblies (supercomplex SCI(1)III(2)IV(1) and megacomplex MCI(2)III(2)IV(2)). Found in a complex with TMEM177, COA6, COX18, COX20, SCO1 and SCO2. Interacts with TMEM177 in a COX20-dependent manner. Interacts with COX20. Interacts with COX16. Cu cation serves as cofactor.

Its subcellular location is the mitochondrion inner membrane. It catalyses the reaction 4 Fe(II)-[cytochrome c] + O2 + 8 H(+)(in) = 4 Fe(III)-[cytochrome c] + 2 H2O + 4 H(+)(out). Component of the cytochrome c oxidase, the last enzyme in the mitochondrial electron transport chain which drives oxidative phosphorylation. The respiratory chain contains 3 multisubunit complexes succinate dehydrogenase (complex II, CII), ubiquinol-cytochrome c oxidoreductase (cytochrome b-c1 complex, complex III, CIII) and cytochrome c oxidase (complex IV, CIV), that cooperate to transfer electrons derived from NADH and succinate to molecular oxygen, creating an electrochemical gradient over the inner membrane that drives transmembrane transport and the ATP synthase. Cytochrome c oxidase is the component of the respiratory chain that catalyzes the reduction of oxygen to water. Electrons originating from reduced cytochrome c in the intermembrane space (IMS) are transferred via the dinuclear copper A center (CU(A)) of subunit 2 and heme A of subunit 1 to the active site in subunit 1, a binuclear center (BNC) formed by heme A3 and copper B (CU(B)). The BNC reduces molecular oxygen to 2 water molecules using 4 electrons from cytochrome c in the IMS and 4 protons from the mitochondrial matrix. The sequence is that of Cytochrome c oxidase subunit 2 (MT-CO2) from Cheirogaleus medius (Fat-tailed dwarf lemur).